Consider the following 795-residue polypeptide: MTAKPKTAPTDLDTLSKAKAKVELKRLSLEIERHNNAYYQDDAPKISDAEYDALRHRVEAIEAKFPELVSSDSPTQKVGAAPARGFAKVQHAVPMLSLGNAFSDDEVAEFLTRVRRFLKLDAEQIPAIVAEPKIDGLSLSLRYEHGKLVRAATRGDGFTGEDVTANVRTIKDIPHALAVAEPPAACELRGEVYMLKSDFLALNQRQETAGEPPFANPRNSAAGSLRQKDVAITASRPLKFFAYAWGEFSDLPEATQYGMLGWLKRAGFTVNPLITLCKSVDDALAFYRKIGEERATLPYDIDGVVYKVDRLDWQERLGFAGRAPRWAIAHKFAAEQATTILNGIEIQVGRTGALTPVARLAPVTVGGVVVQNATLHNEDYIKSLDIHIGDTVVVQRAGDVIPQIVSVVRDKRPEDAEPYEFPKFCPACGSHAVRDEDEGEAVRRCTGGLICPAQAIERLRHFVSRGAFDIAGFGETYVELLYEEGLVRNPADIFALHSKVDELKAALFRKRESLATQREEKTGKKRKSSLSEEKRQYTDVENLLAAIDARRTVAFNRFIFGLGIRHVGEVTSKALVRHFADVKAFLDGVDAAALARPGPAWLDLKNVRYIGEITLERLLEIQGGADTNEERQGFQPDARQRASLLSHYGNEEKIAGALQAARSEAPGPAFQQLANDSEIGEVATQSLIDFFEETNNRQVVTALMDQVQVERPAAASAKSPISGKIVVFTGALERTTRDEAKAIAERLGAKVASSVSSKTDLVVAGPSAGSKLRDAQKFGVKVLTEEEWAEISGNE.

NAD(+) is bound by residues 48–52 (DAEYD), 97–98 (SL), and E131. The N6-AMP-lysine intermediate role is filled by K133. NAD(+)-binding residues include R154, E191, K307, and K331. The Zn(2+) site is built by C425, C428, C445, and C451. One can recognise a BRCT domain in the interval 716 to 795 (SAKSPISGKI…EEWAEISGNE (80 aa)).

It belongs to the NAD-dependent DNA ligase family. LigA subfamily. Mg(2+) is required as a cofactor. Mn(2+) serves as cofactor.

The enzyme catalyses NAD(+) + (deoxyribonucleotide)n-3'-hydroxyl + 5'-phospho-(deoxyribonucleotide)m = (deoxyribonucleotide)n+m + AMP + beta-nicotinamide D-nucleotide.. Its function is as follows. DNA ligase that catalyzes the formation of phosphodiester linkages between 5'-phosphoryl and 3'-hydroxyl groups in double-stranded DNA using NAD as a coenzyme and as the energy source for the reaction. It is essential for DNA replication and repair of damaged DNA. The chain is DNA ligase from Rhodopseudomonas palustris (strain BisB18).